Reading from the N-terminus, the 174-residue chain is Co-chaperone protein HscB homolog (174 aa).

Residues 2–74 (NYFELFSLLP…IQRAEHLLTL (73 aa)) enclose the J domain.

Belongs to the HscB family. As to quaternary structure, interacts with HscA and stimulates its ATPase activity.

Co-chaperone involved in the maturation of iron-sulfur cluster-containing proteins. Seems to help targeting proteins to be folded toward HscA. This chain is Co-chaperone protein HscB homolog, found in Shewanella halifaxensis (strain HAW-EB4).